Consider the following 255-residue polypeptide: MSSPGRPKGEYRSAQHAGAVAGPPGRPDGEHRGSSGADPNGRLRQACDSLGLRVEAAQADKLLAYLAQMQRWNRTYNLTAIRDPEQMLVQHLFDSLSVVDPLSRVVGADTAATVYDIGSGGGLPGVVLAIMRPTWQIGCVDAVEKKMAFVRQMSGVLALPNLRALHARVEELPPAGCDVVISRAFASLNDFASLAGRHVRNDGTLVAMKGKVPEDEIQTLHQQGEWQVQEIQALQVPALDAQRCLIWMRRSQGTL.

Positions 1–44 are disordered; that stretch reads MSSPGRPKGEYRSAQHAGAVAGPPGRPDGEHRGSSGADPNGRLR. S-adenosyl-L-methionine is bound by residues Gly118, Leu123, 169 to 170, and Arg183; that span reads VE.

Belongs to the methyltransferase superfamily. RNA methyltransferase RsmG family.

Its subcellular location is the cytoplasm. It carries out the reaction guanosine(527) in 16S rRNA + S-adenosyl-L-methionine = N(7)-methylguanosine(527) in 16S rRNA + S-adenosyl-L-homocysteine. Specifically methylates the N7 position of guanine in position 527 of 16S rRNA. In Bordetella petrii (strain ATCC BAA-461 / DSM 12804 / CCUG 43448), this protein is Ribosomal RNA small subunit methyltransferase G.